The chain runs to 468 residues: 6-phospho-beta-galactosidase (468 aa).

D-galactose 6-phosphate is bound by residues Gln-19, His-116, Asn-159, Glu-160, and Asn-297. The active-site Proton donor is Glu-160. Glu-375 serves as the catalytic Nucleophile. Residues Ser-428, Trp-429, Lys-435, and Tyr-437 each contribute to the D-galactose 6-phosphate site.

Belongs to the glycosyl hydrolase 1 family.

The enzyme catalyses a 6-phospho-beta-D-galactoside + H2O = D-galactose 6-phosphate + an alcohol. It functions in the pathway carbohydrate metabolism; lactose degradation; D-galactose 6-phosphate and beta-D-glucose from lactose 6-phosphate: step 1/1. This Streptococcus agalactiae serotype III (strain NEM316) protein is 6-phospho-beta-galactosidase.